The sequence spans 181 residues: Kappa-casein (181 aa).

Positions 1-21 (MMRNFIVVVNILALTLPFLAA) are cleaved as a signal peptide. A Phosphothreonine modification is found at threonine 123. O-linked (GalNAc...) threonine glycans are attached at residues threonine 134, threonine 144, and threonine 155. Serine 162 carries the post-translational modification Phosphoserine; alternate. The O-linked (GalNAc...) serine; alternate glycan is linked to serine 162. Position 178 is a phosphoserine (serine 178).

The protein belongs to the kappa-casein family. In terms of tissue distribution, mammary gland specific. Secreted in milk.

The protein resides in the secreted. Its function is as follows. Kappa-casein stabilizes micelle formation, preventing casein precipitation in milk. This Mus musculus (Mouse) protein is Kappa-casein (Csn3).